A 579-amino-acid chain; its full sequence is Laccase-24 (579 aa).

An N-terminal signal peptide occupies residues 1-23 (MARSWSLLLLPFALALVASVAQA). 2 Plastocyanin-like domains span residues 31-148 (NVGN…PRGG) and 159-322 (EEVV…YGGG). 2 N-linked (GlcNAc...) asparagine glycosylation sites follow: Asn34 and Asn78. Cu cation contacts are provided by His82 and His84. N-linked (GlcNAc...) asparagine glycosylation is found at Asn110 and Asn116. Cu cation contacts are provided by His127 and His129. Residues Asn204, Asn209, Asn219, Asn241, Asn312, Asn337, Asn348, Asn398, Asn405, Asn444, and Asn462 are each glycosylated (N-linked (GlcNAc...) asparagine). The 139-residue stretch at 425–563 (DFPDTPPIVF…GMVFEVQNGP (139 aa)) folds into the Plastocyanin-like 3 domain. Positions 480, 483, and 485 each coordinate Cu cation. Asn500 carries an N-linked (GlcNAc...) asparagine glycan. Cu cation contacts are provided by His542, Cys543, His544, and His548.

The protein belongs to the multicopper oxidase family. Requires Cu cation as cofactor.

The protein localises to the secreted. The protein resides in the extracellular space. Its subcellular location is the apoplast. It catalyses the reaction 4 hydroquinone + O2 = 4 benzosemiquinone + 2 H2O. Lignin degradation and detoxification of lignin-derived products. In Oryza sativa subsp. japonica (Rice), this protein is Laccase-24 (LAC24).